The sequence spans 76 residues: Small ribosomal subunit protein bS18 (76 aa).

Belongs to the bacterial ribosomal protein bS18 family. As to quaternary structure, part of the 30S ribosomal subunit. Forms a tight heterodimer with protein bS6.

In terms of biological role, binds as a heterodimer with protein bS6 to the central domain of the 16S rRNA, where it helps stabilize the platform of the 30S subunit. The sequence is that of Small ribosomal subunit protein bS18 from Carboxydothermus hydrogenoformans (strain ATCC BAA-161 / DSM 6008 / Z-2901).